Here is a 251-residue protein sequence, read N- to C-terminus: MMVIPAVDIKGGKCVRLLQGDMNAETVFSDDPGAMAERWAEAGAELIHVVDLDGAIEKSPRNLKAISALIRRVGVPVQVGGGIREIDTVKMYADLGVARIVIGSAAVNHPDLVTAACREFPGRIVLGIDARDGRVATEGWTSTTDIAAADLAARFEGCGVAAINFTDIHRDGMRTGPNIPAIEAFARATAIPVVASGGVSTIDDIQALLGIQEFGVTGVITGRALYDGTLDLAEAIAVASAGDSTSQKSVG.

The active-site Proton acceptor is the D8. The Proton donor role is filled by D129.

It belongs to the HisA/HisF family.

The protein resides in the cytoplasm. It catalyses the reaction 1-(5-phospho-beta-D-ribosyl)-5-[(5-phospho-beta-D-ribosylamino)methylideneamino]imidazole-4-carboxamide = 5-[(5-phospho-1-deoxy-D-ribulos-1-ylimino)methylamino]-1-(5-phospho-beta-D-ribosyl)imidazole-4-carboxamide. The protein operates within amino-acid biosynthesis; L-histidine biosynthesis; L-histidine from 5-phospho-alpha-D-ribose 1-diphosphate: step 4/9. The chain is 1-(5-phosphoribosyl)-5-[(5-phosphoribosylamino)methylideneamino] imidazole-4-carboxamide isomerase from Desulfosudis oleivorans (strain DSM 6200 / JCM 39069 / Hxd3) (Desulfococcus oleovorans).